Reading from the N-terminus, the 421-residue chain is Putative NBPF family member NBPF7 (421 aa).

Residues 87 to 143 (IKSMLREELQFKEEKLAEQLKQAEELRQYKVLVHSQERELIQLREKLREGRDASHSL) are a coiled coil. 3 disordered regions span residues 179-251 (VHKL…KITS), 312-334 (EKEV…HDVS), and 402-421 (YNSK…FTED). Olduvai domains follow at residues 190–279 (EDEN…NILL) and 280–391 (ENQN…RMSQ). The segment covering 194 to 217 (DKTKELDKVQESPAPREEQKAEEK) has biased composition (basic and acidic residues). The span at 230 to 243 (TYSNSHGPSDSNPP) shows a compositional bias: polar residues. Over residues 312–333 (EKEVLQDSPEERVTTSCSDHDV) the composition is skewed to basic and acidic residues. Over residues 403-421 (NSKPSSIPNTTLQGSFTED) the composition is skewed to polar residues.

The protein belongs to the NBPF family.

It is found in the cytoplasm. The polypeptide is Putative NBPF family member NBPF7 (Homo sapiens (Human)).